Here is a 340-residue protein sequence, read N- to C-terminus: Glycerol-3-phosphate dehydrogenase [NAD(P)+] (340 aa).

Residues Ser-15, Tyr-16, His-36, and Lys-110 each contribute to the NADPH site. 3 residues coordinate sn-glycerol 3-phosphate: Lys-110, Gly-139, and Thr-141. Ala-143 serves as a coordination point for NADPH. Sn-glycerol 3-phosphate is bound by residues Lys-196, Asp-249, Ser-259, Arg-260, and Asn-261. Lys-196 serves as the catalytic Proton acceptor. Residue Arg-260 participates in NADPH binding. The NADPH site is built by Val-284 and Glu-286.

Belongs to the NAD-dependent glycerol-3-phosphate dehydrogenase family.

Its subcellular location is the cytoplasm. It catalyses the reaction sn-glycerol 3-phosphate + NAD(+) = dihydroxyacetone phosphate + NADH + H(+). The catalysed reaction is sn-glycerol 3-phosphate + NADP(+) = dihydroxyacetone phosphate + NADPH + H(+). Its pathway is membrane lipid metabolism; glycerophospholipid metabolism. Functionally, catalyzes the reduction of the glycolytic intermediate dihydroxyacetone phosphate (DHAP) to sn-glycerol 3-phosphate (G3P), the key precursor for phospholipid synthesis. The polypeptide is Glycerol-3-phosphate dehydrogenase [NAD(P)+] (Serratia marcescens).